A 116-amino-acid chain; its full sequence is Flagellar transcriptional regulator FlhD (116 aa).

It belongs to the FlhD family. As to quaternary structure, homodimer; disulfide-linked. Forms a heterohexamer composed of two FlhC and four FlhD subunits. Each FlhC binds a FlhD dimer, forming a heterotrimer, and a hexamer assembles by dimerization of two heterotrimers.

It is found in the cytoplasm. In terms of biological role, functions in complex with FlhC as a master transcriptional regulator that regulates transcription of several flagellar and non-flagellar operons by binding to their promoter region. Activates expression of class 2 flagellar genes, including fliA, which is a flagellum-specific sigma factor that turns on the class 3 genes. Also regulates genes whose products function in a variety of physiological pathways. This Proteus mirabilis (strain HI4320) protein is Flagellar transcriptional regulator FlhD.